Reading from the N-terminus, the 787-residue chain is MVELESMSSSSEWFLNNNSNIHNNTHNHNHNNNNNNNNINSNNHGHSANSSAHNHNNNNNNNTNNNSNNSNNNNNNNNNNNNTQNTNNGTFLTPLPVLTNSSTGLGKSIDWLYTNTSNTDSHNINSSSNKVTKLSNGFSLLNQDGTQSPSCFLNLSSTGNHEDPVQVPMNNNPQDLLFQFNISPQLQSQNNNSSNNNNNNNNNGSNTPLNGSNGSNNNYSSPISPVPQYQHSAGSSPIQEYPYYSPSSSPHSNESTSPITVIKDSGSIINPINNNNNNNNNNNNNNNNNNNNNNNNNNKNNLNNNTFQFSSLKSTTGIAPPLQTDYHLLYNFVQQNFSGKPEDSLLNQTLNNNNNNNNNNNNNNNNTTIQTSPQPLVLPQIQNPFLPYNISTPISVPNNILSSAQSSTNSSPNNNNNNNNNNNNIFSTVNNNNNLVNNNSNNMELDVDKPFSQEKFYLHLKSIVPSFNENFEASSESAQSESSQESDYDALNERNSGVKKRGRDEDQIDTSGQVVLSREHVLKLSSKEIEEYVSRLKMHHILTQAEEKELKKQRRLVKNREYASQSRSRRKIYVENIETKLQKTNQDCASIKSQLNSVKEENKALKKQLYSLTNTLKSNPSLAEAFGKIFSPIGNNKTSSATLFVFFFLFTFTFLFQSSTVTFNSDRVSSIQRNLLSLEETQATEWNIKRAILEETKQYVDSLLTSLYTSKLQSLSETPLDTSNYIINNNNNESTSETTTNNKVVSTSSDDISNVLSNLSVSDKEVPQKCKDSSDLKCDSPPLSPLN.

Low complexity predominate over residues 18 to 90; sequence NSNIHNNTHN…NNTQNTNNGT (73 aa). Disordered stretches follow at residues 18 to 95, 153 to 173, 186 to 306, 343 to 372, 401 to 441, and 473 to 507; these read NSNI…LTPL, LNLSSTGNHEDPVQVPMNNNP, LQSQ…NNNT, DSLLNQTLNNNNNNNNNNNNNNNNTTIQTS, LSSA…NNSN, and ASSESAQSESSQESDYDALNERNSGVKKRGRDEDQ. Low complexity-rich tracts occupy residues 186–223, 235–258, 273–305, and 351–366; these read LQSQNNNSSNNNNNNNNNGSNTPLNGSNGSNNNYSSPI, SSPIQEYPYYSPSSSPHSNESTSP, NNNNNNNNNNNNNNNNNNNNNNNNNNKNNLNNN, and NNNNNNNNNNNNNNNN. Over residues 473–483 the composition is skewed to low complexity; it reads ASSESAQSESS. A bZIP domain is found at 549–612; the sequence is ELKKQRRLVK…KALKKQLYSL (64 aa). A basic motif region spans residues 551–603; sequence KKQRRLVKNREYASQSRSRRKIYVENIETKLQKTNQDCASIKSQLNSVKEENK. Residues 605–612 are leucine-zipper; that stretch reads LKKQLYSL. 2 disordered regions span residues 723–747 and 763–787; these read SNYIINNNNNESTSETTTNNKVVST and DKEVPQKCKDSSDLKCDSPPLSPLN. Residues 763–778 are compositionally biased toward basic and acidic residues; sequence DKEVPQKCKDSSDLKC.

Belongs to the bZIP family.

It localises to the nucleus. Its function is as follows. Probable transcriptional regulator. The chain is Probable basic-leucine zipper transcription factor J (bzpJ) from Dictyostelium discoideum (Social amoeba).